A 207-amino-acid polypeptide reads, in one-letter code: Ribosomal RNA small subunit methyltransferase G (207 aa).

S-adenosyl-L-methionine contacts are provided by residues Gly74, Phe79, 124-125, and Arg138; that span reads VE.

The protein belongs to the methyltransferase superfamily. RNA methyltransferase RsmG family.

The protein resides in the cytoplasm. The catalysed reaction is guanosine(527) in 16S rRNA + S-adenosyl-L-methionine = N(7)-methylguanosine(527) in 16S rRNA + S-adenosyl-L-homocysteine. In terms of biological role, specifically methylates the N7 position of guanine in position 527 of 16S rRNA. The chain is Ribosomal RNA small subunit methyltransferase G from Hyphomonas neptunium (strain ATCC 15444).